The sequence spans 188 residues: Elongation factor P (188 aa).

It belongs to the elongation factor P family.

Its subcellular location is the cytoplasm. It functions in the pathway protein biosynthesis; polypeptide chain elongation. In terms of biological role, involved in peptide bond synthesis. Stimulates efficient translation and peptide-bond synthesis on native or reconstituted 70S ribosomes in vitro. Probably functions indirectly by altering the affinity of the ribosome for aminoacyl-tRNA, thus increasing their reactivity as acceptors for peptidyl transferase. This is Elongation factor P (efp) from Rickettsia prowazekii (strain Madrid E).